Consider the following 39-residue polypeptide: Cytochrome b6-f complex subunit 5 (39 aa).

The chain crosses the membrane as a helical span at residues 5-25 (LLCGIVLGLVPITLLGLFVSA).

The protein belongs to the PetG family. In terms of assembly, the 4 large subunits of the cytochrome b6-f complex are cytochrome b6, subunit IV (17 kDa polypeptide, PetD), cytochrome f and the Rieske protein, while the 4 small subunits are PetG, PetL, PetM and PetN. The complex functions as a dimer.

It is found in the cellular thylakoid membrane. Component of the cytochrome b6-f complex, which mediates electron transfer between photosystem II (PSII) and photosystem I (PSI), cyclic electron flow around PSI, and state transitions. PetG is required for either the stability or assembly of the cytochrome b6-f complex. This chain is Cytochrome b6-f complex subunit 5, found in Prochlorococcus marinus subsp. pastoris (strain CCMP1986 / NIES-2087 / MED4).